Reading from the N-terminus, the 235-residue chain is MGKRRWSQHFLRDTSVAQFITELVPSGLDIIEVGPGRGALTLPLAEKSKTIYAIEIDPTLAEFLKRQAPPNVVVIVGDALEIEWPRADFFVSNIPYSITSPLLLKLAKYRLPAVVTIQKEVAERLVAAPGTENYGRLTVAIRCHYDVEVLRILPPHVFSPPPKVYSAVVRLTPRRPCVEDFENFQRFTARLFSTRRKTLRRLKLGETEKRVYQLTLEEIVELYKKHFDTTETCRS.

Residues histidine 9, leucine 11, glycine 34, glutamate 55, aspartate 78, and asparagine 93 each coordinate S-adenosyl-L-methionine.

It belongs to the class I-like SAM-binding methyltransferase superfamily. rRNA adenine N(6)-methyltransferase family. RsmA subfamily.

Its subcellular location is the cytoplasm. Functionally, specifically dimethylates two adjacent adenosines in the loop of a conserved hairpin near the 3'-end of 16S rRNA in the 30S particle. May play a critical role in biogenesis of 30S subunits. The chain is Probable ribosomal RNA small subunit methyltransferase A from Pyrobaculum islandicum (strain DSM 4184 / JCM 9189 / GEO3).